The following is a 513-amino-acid chain: GMP synthase [glutamine-hydrolyzing] (513 aa).

A Glutamine amidotransferase type-1 domain is found at threonine 3–asparagine 192. The Nucleophile role is filled by cysteine 80. Residues histidine 166 and glutamate 168 contribute to the active site. Positions tryptophan 193–arginine 388 constitute a GMPS ATP-PPase domain. Serine 220–serine 226 contacts ATP.

Homodimer.

The enzyme catalyses XMP + L-glutamine + ATP + H2O = GMP + L-glutamate + AMP + diphosphate + 2 H(+). Its pathway is purine metabolism; GMP biosynthesis; GMP from XMP (L-Gln route): step 1/1. Its function is as follows. Catalyzes the synthesis of GMP from XMP. The protein is GMP synthase [glutamine-hydrolyzing] of Thermosipho melanesiensis (strain DSM 12029 / CIP 104789 / BI429).